The sequence spans 104 residues: UPF0213 protein VIBHAR_05350 (104 aa).

Residues 7–82 enclose the GIY-YIG domain; it reads QRWSVYLIRN…KQLTKTKKEL (76 aa).

It belongs to the UPF0213 family.

The protein is UPF0213 protein VIBHAR_05350 of Vibrio campbellii (strain ATCC BAA-1116).